Consider the following 181-residue polypeptide: uncharacterized protein (181 aa).

A run of 2 helical transmembrane segments spans residues 24–46 (IAAV…LLNV) and 55–77 (GIVA…YILL).

Its subcellular location is the cell membrane. This is an uncharacterized protein from Archaeoglobus fulgidus (strain ATCC 49558 / DSM 4304 / JCM 9628 / NBRC 100126 / VC-16).